Here is an 853-residue protein sequence, read N- to C-terminus: DNA mismatch repair protein MutS (853 aa).

614–621 serves as a coordination point for ATP; the sequence is GPNMGGKS.

Belongs to the DNA mismatch repair MutS family.

Functionally, this protein is involved in the repair of mismatches in DNA. It is possible that it carries out the mismatch recognition step. This protein has a weak ATPase activity. This chain is DNA mismatch repair protein MutS, found in Escherichia coli O7:K1 (strain IAI39 / ExPEC).